We begin with the raw amino-acid sequence, 334 residues long: Glycerol-3-phosphate dehydrogenase [NAD(P)+] (334 aa).

The NADPH site is built by Ser14, Tyr15, His35, and Lys109. Sn-glycerol 3-phosphate contacts are provided by Lys109, Gly138, and Thr140. An NADPH-binding site is contributed by Ala142. Positions 194, 247, 257, 258, and 259 each coordinate sn-glycerol 3-phosphate. Lys194 serves as the catalytic Proton acceptor. NADPH is bound at residue Arg258. Residues Val282 and Glu284 each contribute to the NADPH site.

It belongs to the NAD-dependent glycerol-3-phosphate dehydrogenase family.

The protein localises to the cytoplasm. The catalysed reaction is sn-glycerol 3-phosphate + NAD(+) = dihydroxyacetone phosphate + NADH + H(+). It catalyses the reaction sn-glycerol 3-phosphate + NADP(+) = dihydroxyacetone phosphate + NADPH + H(+). It functions in the pathway membrane lipid metabolism; glycerophospholipid metabolism. Catalyzes the reduction of the glycolytic intermediate dihydroxyacetone phosphate (DHAP) to sn-glycerol 3-phosphate (G3P), the key precursor for phospholipid synthesis. The polypeptide is Glycerol-3-phosphate dehydrogenase [NAD(P)+] (Tolumonas auensis (strain DSM 9187 / NBRC 110442 / TA 4)).